The sequence spans 89 residues: Peroxidase (89 aa).

Residue histidine 52 coordinates heme. Ca(2+) contacts are provided by threonine 53 and aspartate 68.

Heme b serves as cofactor. Ca(2+) is required as a cofactor.

It localises to the secreted. It catalyses the reaction 2 a phenolic donor + H2O2 = 2 a phenolic radical donor + 2 H2O. In terms of biological role, removal of H(2)O(2), oxidation of toxic reductants, biosynthesis and degradation of lignin, suberization, auxin catabolism, response to environmental stresses such as wounding, pathogen attack and oxidative stress. These functions might be dependent on each isozyme/isoform in each plant tissue. Active against p-coumaryl alcohol, coniferyl alcohol and coniferyl aldehyde. This Ginkgo biloba (Ginkgo) protein is Peroxidase.